Reading from the N-terminus, the 129-residue chain is Small ribosomal subunit protein uS11 (129 aa).

Belongs to the universal ribosomal protein uS11 family. In terms of assembly, part of the 30S ribosomal subunit. Interacts with proteins S7 and S18. Binds to IF-3.

Functionally, located on the platform of the 30S subunit, it bridges several disparate RNA helices of the 16S rRNA. Forms part of the Shine-Dalgarno cleft in the 70S ribosome. The chain is Small ribosomal subunit protein uS11 from Haemophilus influenzae (strain 86-028NP).